The following is a 65-amino-acid chain: Large ribosomal subunit protein bL35 (65 aa).

The protein belongs to the bacterial ribosomal protein bL35 family.

This is Large ribosomal subunit protein bL35 from Geobacter sp. (strain M21).